The sequence spans 402 residues: NADH-quinone oxidoreductase subunit D (402 aa).

Belongs to the complex I 49 kDa subunit family. NDH-1 is composed of 14 different subunits. Subunits NuoB, C, D, E, F, and G constitute the peripheral sector of the complex.

The protein localises to the cell inner membrane. It carries out the reaction a quinone + NADH + 5 H(+)(in) = a quinol + NAD(+) + 4 H(+)(out). Functionally, NDH-1 shuttles electrons from NADH, via FMN and iron-sulfur (Fe-S) centers, to quinones in the respiratory chain. The immediate electron acceptor for the enzyme in this species is believed to be ubiquinone. Couples the redox reaction to proton translocation (for every two electrons transferred, four hydrogen ions are translocated across the cytoplasmic membrane), and thus conserves the redox energy in a proton gradient. This is NADH-quinone oxidoreductase subunit D from Xanthobacter autotrophicus (strain ATCC BAA-1158 / Py2).